Consider the following 516-residue polypeptide: Putative F-box and FNIP repeat-containing protein L414 (516 aa).

One can recognise an F-box domain in the interval 4 to 49; that stretch reads INDLNMDVILHLLTFLTDKNKLNFMMTCTHLYQFISCVKYNNFQLF. 5 FNIP repeats span residues 123 to 165, 166 to 208, 341 to 383, 385 to 428, and 429 to 470; these read FNHT…FGEN, FNKM…LMYS, YNPK…NFNG, YDNI…FGKL, and YNKP…FGYM.

The protein is Putative F-box and FNIP repeat-containing protein L414 of Acanthamoeba polyphaga (Amoeba).